Consider the following 631-residue polypeptide: 1-deoxy-D-xylulose-5-phosphate synthase (631 aa).

Thiamine diphosphate is bound by residues H87 and 128–130; that span reads GHS. Residue D159 participates in Mg(2+) binding. Thiamine diphosphate contacts are provided by residues 160–161, N188, F295, and E377; that span reads GA. N188 lines the Mg(2+) pocket.

It belongs to the transketolase family. DXPS subfamily. Homodimer. Mg(2+) serves as cofactor. It depends on thiamine diphosphate as a cofactor.

It carries out the reaction D-glyceraldehyde 3-phosphate + pyruvate + H(+) = 1-deoxy-D-xylulose 5-phosphate + CO2. It participates in metabolic intermediate biosynthesis; 1-deoxy-D-xylulose 5-phosphate biosynthesis; 1-deoxy-D-xylulose 5-phosphate from D-glyceraldehyde 3-phosphate and pyruvate: step 1/1. Its function is as follows. Catalyzes the acyloin condensation reaction between C atoms 2 and 3 of pyruvate and glyceraldehyde 3-phosphate to yield 1-deoxy-D-xylulose-5-phosphate (DXP). This chain is 1-deoxy-D-xylulose-5-phosphate synthase, found in Pseudomonas entomophila (strain L48).